We begin with the raw amino-acid sequence, 98 residues long: NADH-ubiquinone oxidoreductase chain 4L (98 aa).

The next 3 membrane-spanning stretches (helical) occupy residues 1–21 (MTPTYMNIMLAFTISLLGMLI), 29–49 (SLLCLEGMMMSLFIMTTLIAL), and 61–81 (IILLVFAACEAAVGLALLVSI).

This sequence belongs to the complex I subunit 4L family. In terms of assembly, core subunit of respiratory chain NADH dehydrogenase (Complex I) which is composed of 45 different subunits.

The protein resides in the mitochondrion inner membrane. It catalyses the reaction a ubiquinone + NADH + 5 H(+)(in) = a ubiquinol + NAD(+) + 4 H(+)(out). Its function is as follows. Core subunit of the mitochondrial membrane respiratory chain NADH dehydrogenase (Complex I) which catalyzes electron transfer from NADH through the respiratory chain, using ubiquinone as an electron acceptor. Part of the enzyme membrane arm which is embedded in the lipid bilayer and involved in proton translocation. The polypeptide is NADH-ubiquinone oxidoreductase chain 4L (MT-ND4L) (Macaca maura (Moor macaque)).